A 378-amino-acid chain; its full sequence is Cytochrome b (378 aa).

4 consecutive transmembrane segments (helical) span residues 33–53 (FGSL…FLAM), 77–98 (WLIR…YLHI), 113–133 (WNTG…GYVL), and 178–198 (FFAF…LHFL). Residues histidine 83 and histidine 97 each contribute to the heme b site. Histidine 182 and histidine 196 together coordinate heme b. Position 201 (histidine 201) interacts with a ubiquinone. The next 4 membrane-spanning stretches (helical) occupy residues 226 to 246 (YKDL…AVFS), 288 to 308 (LGGV…PFLH), 320 to 340 (WSQL…WIGG), and 347 to 367 (LTTV…FLMP).

Belongs to the cytochrome b family. As to quaternary structure, the cytochrome bc1 complex contains 3 respiratory subunits (MT-CYB, CYC1 and UQCRFS1), 2 core proteins (UQCRC1 and UQCRC2) and probably 6 low-molecular weight proteins. Heme b serves as cofactor.

The protein localises to the mitochondrion inner membrane. In terms of biological role, component of the ubiquinol-cytochrome c reductase complex (complex III or cytochrome b-c1 complex) that is part of the mitochondrial respiratory chain. The b-c1 complex mediates electron transfer from ubiquinol to cytochrome c. Contributes to the generation of a proton gradient across the mitochondrial membrane that is then used for ATP synthesis. In Indostomus paradoxus (Armoured stickleback), this protein is Cytochrome b (mt-cyb).